Here is a 369-residue protein sequence, read N- to C-terminus: 3',5'-cyclic-nucleotide phosphodiesterase 1 (369 aa).

This sequence belongs to the cyclic nucleotide phosphodiesterase class-II family.

It carries out the reaction a nucleoside 3',5'-cyclic phosphate + H2O = a nucleoside 5'-phosphate + H(+). Its function is as follows. Controls the level of cAMP in yeast cells, together with the high-affinity cAMP phosphodiesterase (PDE2). This Saccharomyces cerevisiae (strain ATCC 204508 / S288c) (Baker's yeast) protein is 3',5'-cyclic-nucleotide phosphodiesterase 1 (PDE1).